We begin with the raw amino-acid sequence, 434 residues long: Serine hydroxymethyltransferase (434 aa).

Residues Leu-133 and 137-139 (GHL) contribute to the (6S)-5,6,7,8-tetrahydrofolate site. Lys-242 bears the N6-(pyridoxal phosphate)lysine mark.

Belongs to the SHMT family. In terms of assembly, homodimer. Pyridoxal 5'-phosphate serves as cofactor.

The protein resides in the cytoplasm. The catalysed reaction is (6R)-5,10-methylene-5,6,7,8-tetrahydrofolate + glycine + H2O = (6S)-5,6,7,8-tetrahydrofolate + L-serine. It participates in one-carbon metabolism; tetrahydrofolate interconversion. Its pathway is amino-acid biosynthesis; glycine biosynthesis; glycine from L-serine: step 1/1. Its function is as follows. Catalyzes the reversible interconversion of serine and glycine with tetrahydrofolate (THF) serving as the one-carbon carrier. This reaction serves as the major source of one-carbon groups required for the biosynthesis of purines, thymidylate, methionine, and other important biomolecules. Also exhibits THF-independent aldolase activity toward beta-hydroxyamino acids, producing glycine and aldehydes, via a retro-aldol mechanism. The chain is Serine hydroxymethyltransferase from Methylorubrum extorquens (strain CM4 / NCIMB 13688) (Methylobacterium extorquens).